We begin with the raw amino-acid sequence, 96 residues long: UPF0729 protein AGAP000931 (96 aa).

Residues 65 to 96 (VPPGHDPVGPTVAADTATSDAVDDAASSKKTL) are disordered. Over residues 75–96 (TVAADTATSDAVDDAASSKKTL) the composition is skewed to low complexity.

This sequence belongs to the UPF0729 family.

This Anopheles gambiae (African malaria mosquito) protein is UPF0729 protein AGAP000931.